The chain runs to 275 residues: Subtilisin (275 aa).

Gln-2 contributes to the Ca(2+) binding site. Positions 5-274 constitute a Peptidase S8 domain; sequence PYGISQIKAP…KGLINVQAAA (270 aa). Residue Asp-32 is the Charge relay system of the active site. Position 41 (Asp-41) interacts with Ca(2+). His-64 acts as the Charge relay system in catalysis. Leu-75, Asn-77, Ile-79, Val-81, Ala-169, Tyr-171, and Thr-174 together coordinate Ca(2+). The active-site Charge relay system is the Ser-221.

This sequence belongs to the peptidase S8 family. Ca(2+) is required as a cofactor.

It localises to the secreted. The enzyme catalyses Hydrolysis of proteins with broad specificity for peptide bonds, and a preference for a large uncharged residue in P1. Hydrolyzes peptide amides.. Its function is as follows. Subtilisin is an extracellular alkaline serine protease, it catalyzes the hydrolysis of proteins and peptide amides. The sequence is that of Subtilisin (apr) from Bacillus pumilus (Bacillus mesentericus).